Reading from the N-terminus, the 138-residue chain is Large ribosomal subunit protein uL16 (138 aa).

A compositionally biased stretch (basic residues) spans 1 to 13 (MLQPKRRKYRKEQ). The disordered stretch occupies residues 1-24 (MLQPKRRKYRKEQKGRNTGKATRG).

The protein belongs to the universal ribosomal protein uL16 family. In terms of assembly, part of the 50S ribosomal subunit.

Functionally, binds 23S rRNA and is also seen to make contacts with the A and possibly P site tRNAs. In Cupriavidus necator (strain ATCC 17699 / DSM 428 / KCTC 22496 / NCIMB 10442 / H16 / Stanier 337) (Ralstonia eutropha), this protein is Large ribosomal subunit protein uL16.